The primary structure comprises 70 residues: Probable rubredoxin HupI (70 aa).

The 52-residue stretch at 15–66 folds into the Rubredoxin-like domain; that stretch reads DDRMECGICWHVYDPAEGDPVWQIPPGTPFSNLTEDWRCPNCDALQSKFMRL. Cysteine 20, cysteine 23, cysteine 53, and cysteine 56 together coordinate Fe cation.

It belongs to the rubredoxin family. Requires Fe(3+) as cofactor.

Could be an electron transport intermediate in hydrogen oxidation. This is Probable rubredoxin HupI (hupI) from Rhizobium leguminosarum bv. viciae.